Here is a 383-residue protein sequence, read N- to C-terminus: MESIEQSIIPGLPDDLALRCIAKLSHGYHGVLECVSRGWRDLVRGADYSCYKARNGWSGSWLFVLTERSKNQWVAYDPEADRWHPLPRTRAVQDGWHHSGFACVCVSNCLLVIGGCYAPSVSSFPHQKPVVTKDVMRFDPFKKQWKMVASMRTPRTHFACTSVSGKVYVAGGRNLTHSRGIPSAEVYDPVADRWEELPAMPRPQMDCSGLSYRGCFHVLSDQVGFAEQNSSEVFNPRDMTWSTVEDVWPFSRAMQFAVQVMKNDRVYTIVDWGESLIKTRDTDEGEWYNVGSVPSVVLPNHPRELEAFGYGFAALRNELYVIGGKVLKWEESGAGRFDIVRLPVVRVCNPLDRPLNWRETKPMCIPAGGSIIGCVSLEESSPP.

An F-box domain is found at 7–54 (SIIPGLPDDLALRCIAKLSHGYHGVLECVSRGWRDLVRGADYSCYKAR). Kelch repeat units follow at residues 50 to 103 (CYKA…GFAC), 109 to 165 (CLLV…SVSG), 166 to 214 (KVYV…SYRG), 216 to 263 (FHVL…VMKN), and 318 to 377 (ELYV…CVSL).

The chain is F-box/kelch-repeat protein At1g16250 from Arabidopsis thaliana (Mouse-ear cress).